Here is a 110-residue protein sequence, read N- to C-terminus: Nucleoid-associated protein Sfum_2790 (110 aa).

This sequence belongs to the YbaB/EbfC family. In terms of assembly, homodimer.

Its subcellular location is the cytoplasm. The protein localises to the nucleoid. Binds to DNA and alters its conformation. May be involved in regulation of gene expression, nucleoid organization and DNA protection. The sequence is that of Nucleoid-associated protein Sfum_2790 from Syntrophobacter fumaroxidans (strain DSM 10017 / MPOB).